Reading from the N-terminus, the 188-residue chain is Putative manganese efflux pump MntP (188 aa).

A run of 6 helical transmembrane segments spans residues 3–23 (LYAL…VALA), 35–55 (IAAT…AGWV), 70–90 (WAAF…GLSG), 104–126 (WLTV…GLAF), 140–160 (MATT…GVLF), and 167–187 (AGGL…LGLI).

It belongs to the MntP (TC 9.B.29) family.

The protein localises to the cell inner membrane. Its function is as follows. Probably functions as a manganese efflux pump. This Neisseria meningitidis serogroup C / serotype 2a (strain ATCC 700532 / DSM 15464 / FAM18) protein is Putative manganese efflux pump MntP.